The chain runs to 120 residues: HTH-type transcriptional regulator NmtR (120 aa).

The region spanning 15–109 is the HTH arsR-type domain; the sequence is LDSQAAAQVA…EAIYHSEHLH (95 aa). A DNA-binding region (H-T-H motif) is located at residues 49–72; that stretch reads VTDLAEAIGMEQSAVSHQLRVLRN. Residues aspartate 91, histidine 93, histidine 104, and histidine 107 each contribute to the Ni(2+) site.

As to quaternary structure, homodimer.

Binding to DNA is inhibited by nickel and, to some extent, cobalt ions. Represses transcription of ctpJ/nmtA, by binding to its promoter region. This chain is HTH-type transcriptional regulator NmtR (nmtR), found in Mycobacterium tuberculosis (strain ATCC 25618 / H37Rv).